The primary structure comprises 221 residues: MEPLIHPLLDEATVSHLRASLLTDETSWQDGRKTAGYQAAEVKNNLQLKRYSKTAKENSQLVIEKLESDPLVKSFALPRHIHGVMFSRSGIGQGYGMHVDNAYMSSGRSDLSFTLFLSEPESYDGGALCIQTLQDSKQVKLPAGQLIIYPSTSLHAVETVTAGERLVCVGWIQSYISSNEDRTILFGLNAGARALLAEHGRSPELDLIFQAYTNLLRRLGS.

One can recognise a Fe2OG dioxygenase domain in the interval 80 to 174; it reads HIHGVMFSRS…RLVCVGWIQS (95 aa). Fe cation contacts are provided by histidine 98, aspartate 100, and histidine 155. Arginine 165 provides a ligand contact to 2-oxoglutarate.

Fe(2+) serves as cofactor. L-ascorbate is required as a cofactor.

The chain is PKHD-type hydroxylase P9303_20491 from Prochlorococcus marinus (strain MIT 9303).